Reading from the N-terminus, the 477-residue chain is Glutamyl-tRNA reductase (477 aa).

Residues 49-52 (TCNR), S109, 114-116 (EQQ), and Q120 each bind substrate. Catalysis depends on C50, which acts as the Nucleophile. 189–194 (GAGAMG) is an NADP(+) binding site.

Belongs to the glutamyl-tRNA reductase family. In terms of assembly, homodimer.

The enzyme catalyses (S)-4-amino-5-oxopentanoate + tRNA(Glu) + NADP(+) = L-glutamyl-tRNA(Glu) + NADPH + H(+). It participates in porphyrin-containing compound metabolism; protoporphyrin-IX biosynthesis; 5-aminolevulinate from L-glutamyl-tRNA(Glu): step 1/2. Its function is as follows. Catalyzes the NADPH-dependent reduction of glutamyl-tRNA(Glu) to glutamate 1-semialdehyde (GSA). The protein is Glutamyl-tRNA reductase of Nocardia farcinica (strain IFM 10152).